Reading from the N-terminus, the 167-residue chain is 3-isopropylmalate dehydratase small subunit (167 aa).

This sequence belongs to the LeuD family. LeuD type 2 subfamily. Heterodimer of LeuC and LeuD.

The catalysed reaction is (2R,3S)-3-isopropylmalate = (2S)-2-isopropylmalate. It participates in amino-acid biosynthesis; L-leucine biosynthesis; L-leucine from 3-methyl-2-oxobutanoate: step 2/4. In terms of biological role, catalyzes the isomerization between 2-isopropylmalate and 3-isopropylmalate, via the formation of 2-isopropylmaleate. In Oleidesulfovibrio alaskensis (strain ATCC BAA-1058 / DSM 17464 / G20) (Desulfovibrio alaskensis), this protein is 3-isopropylmalate dehydratase small subunit.